The sequence spans 513 residues: uncharacterized protein (513 aa).

13 helical membrane-spanning segments follow: residues 3-23, 47-67, 71-91, 129-149, 153-173, 177-197, 233-253, 273-293, 320-340, 374-394, 395-415, 424-444, and 462-482; these read MTAF…TYFA, LAIA…GMIA, FDGF…LYIV, TFYM…LLGL, AAVL…GMIA, VQII…IIVF, ETLS…HILI, WIIG…AAFV, FLFA…VTGL, ASVA…SLNV, AFLV…LIVF, ASGA…LVSM, and LIPL…GAWL.

Belongs to the sodium:solute symporter (SSF) (TC 2.A.21) family.

It is found in the cell membrane. This is an uncharacterized protein from Bacillus subtilis (strain 168).